We begin with the raw amino-acid sequence, 504 residues long: Protoporphyrinogen oxidase, mitochondrial (504 aa).

Residues 20–25, 43–44, K51, and 65–68 contribute to the FAD site; these read GAGVSG, EA, and GANT. The interval 213–232 is disordered; it reads SPKNEKKQGPPKTSANKKRQ. FAD contacts are provided by residues V264 and 473 to 475; that span reads LSV.

Belongs to the protoporphyrinogen/coproporphyrinogen oxidase family. Protoporphyrinogen oxidase subfamily. It depends on FAD as a cofactor.

The protein resides in the mitochondrion. It carries out the reaction protoporphyrinogen IX + 3 O2 = protoporphyrin IX + 3 H2O2. It functions in the pathway porphyrin-containing compound metabolism; protoporphyrin-IX biosynthesis; protoporphyrin-IX from protoporphyrinogen-IX: step 1/1. Its activity is regulated as follows. Inhibited by the herbicide acifluorfen. In terms of biological role, catalyzes the 6-electron oxidation of protoporphyrinogen-IX to form protoporphyrin-IX. Its function is as follows. Provides precursor for the mitochondrial and plastidic heme synthesis and the predominant chlorophyll synthesis in plastids. This Nicotiana tabacum (Common tobacco) protein is Protoporphyrinogen oxidase, mitochondrial (PPXII).